A 527-amino-acid polypeptide reads, in one-letter code: G patch domain-containing protein 2 (527 aa).

The interval 35-135 is disordered; the sequence is LEESSEQARG…RPSSNLSSSV (101 aa). The segment covering 62–76 has biased composition (basic residues); that stretch reads RQARKRRGRKRRSYN. Basic and acidic residues predominate over residues 97–116; that stretch reads EPSKDYREKHSNNKKDRSDS. Phosphoserine occurs at positions 114, 116, and 145. Disordered stretches follow at residues 175 to 281, 350 to 375, and 480 to 527; these read SSKR…GDDE, TPSKNIKKSSGAPPSMLSAPGPGSNK, and TPGS…GNPA. Residues 186 to 196 show a composition bias toward basic and acidic residues; the sequence is GCRDQDMDNDR. Basic residues predominate over residues 206 to 215; that stretch reads KKVKKRKLKG. Over residues 231-257 the composition is skewed to basic and acidic residues; it reads SEERSQPNKDRMEYEEQKASDELRSES. Residues 466–512 enclose the G-patch domain; it reads ESNIGNRMLQSMGWTPGSGLGRDGRGIAEPVQAVQRPKGLGLGFPLP. Positions 510–527 are enriched in low complexity; it reads PLPKSSPTSPAPTSGNPA.

In terms of assembly, interacts with DHX15.

The protein resides in the nucleus speckle. It is found in the nucleus. Its subcellular location is the nucleolus. In terms of biological role, enhances the ATPase activity of DHX15 in vitro. This Mus musculus (Mouse) protein is G patch domain-containing protein 2 (Gpatch2).